The sequence spans 101 residues: Large ribosomal subunit protein bL21 (101 aa).

This sequence belongs to the bacterial ribosomal protein bL21 family. As to quaternary structure, part of the 50S ribosomal subunit. Contacts protein L20.

Functionally, this protein binds to 23S rRNA in the presence of protein L20. The sequence is that of Large ribosomal subunit protein bL21 from Corynebacterium glutamicum (strain R).